Reading from the N-terminus, the 252-residue chain is tRNA (guanine-N(1)-)-methyltransferase (252 aa).

Residues glycine 118 and 138 to 143 (IGDYVL) contribute to the S-adenosyl-L-methionine site.

This sequence belongs to the RNA methyltransferase TrmD family. In terms of assembly, homodimer.

Its subcellular location is the cytoplasm. The catalysed reaction is guanosine(37) in tRNA + S-adenosyl-L-methionine = N(1)-methylguanosine(37) in tRNA + S-adenosyl-L-homocysteine + H(+). Its function is as follows. Specifically methylates guanosine-37 in various tRNAs. This Pseudomonas paraeruginosa (strain DSM 24068 / PA7) (Pseudomonas aeruginosa (strain PA7)) protein is tRNA (guanine-N(1)-)-methyltransferase.